Here is a 94-residue protein sequence, read N- to C-terminus: Small ubiquitin-related modifier 3 (94 aa).

A Glycyl lysine isopeptide (Lys-Gly) (interchain with G-Cter in SUMO) cross-link involves residue Lys11. A Ubiquitin-like domain is found at 15-92; it reads DHINLKVAGQ…IDVFQQQTGG (78 aa). Gly92 is covalently cross-linked (Glycyl lysine isopeptide (Gly-Lys) (interchain with K-? in acceptor proteins)). The propeptide occupies 93–94; the sequence is LC.

The protein belongs to the ubiquitin family. SUMO subfamily. Interacts with SAE2 and UBE2I. Covalently attached to a number of proteins. In terms of processing, polymeric chains can be formed through Lys-11 cross-linking. Cleavage of precursor form by a sentrin-specific protease is necessary for function.

It localises to the cytoplasm. The protein resides in the nucleus. The protein localises to the PML body. Ubiquitin-like protein which can be covalently attached to target lysines either as a monomer or as a lysine-linked polymer. Does not seem to be involved in protein degradation and may function as an antagonist of ubiquitin in the degradation process. Plays a role in a number of cellular processes such as nuclear transport, DNA replication and repair, mitosis and signal transduction. Covalent attachment to its substrates requires prior activation by the E1 complex SAE1-SAE2 and linkage to the E2 enzyme UBE2I. In Gallus gallus (Chicken), this protein is Small ubiquitin-related modifier 3.